The following is a 578-amino-acid chain: Polypeptide N-acetylgalactosaminyltransferase 4 (578 aa).

Over 1–12 (MAVRWTWAGKSC) the chain is Cytoplasmic. The helical; Signal-anchor for type II membrane protein transmembrane segment at 13-35 (LLLALLTLAYILVEFSVSTLYAS) threads the bilayer. Over 36–578 (PGAGGARELG…DKNQLWRFEK (543 aa)) the chain is Lumenal. Disulfide bonds link Cys124–Cys357, Cys348–Cys421, Cys457–Cys477, Cys503–Cys518, and Cys547–Cys565. The tract at residues 134 to 243 (LPTTSVIIAF…TGWLEPLLER (110 aa)) is catalytic subdomain A. The substrate site is built by Asp175 and Arg204. Residues Asp227 and His229 each coordinate Mn(2+). The interval 303 to 365 (PIRSPTMAGG…PCSHVGHVFP (63 aa)) is catalytic subdomain B. Trp334 is a binding site for substrate. Residue His362 coordinates Mn(2+). Tyr370 lines the substrate pocket. Residues 444 to 577 (WHGAIRSMGI…LDKNQLWRFE (134 aa)) form the Ricin B-type lectin domain. Asn471 carries an N-linked (GlcNAc...) asparagine glycan.

The protein belongs to the glycosyltransferase 2 family. GalNAc-T subfamily. The cofactor is Mn(2+). Highly expressed in sublingual gland, stomach, colon, small intestine and cervix. Expressed at intermediate levels in kidney, ovary, lung and uterus. Weakly expressed in spleen, liver, heart and brain. Not expressed in submandibular and parotid glands, skeletal muscle and testis.

It is found in the golgi apparatus membrane. It carries out the reaction L-seryl-[protein] + UDP-N-acetyl-alpha-D-galactosamine = a 3-O-[N-acetyl-alpha-D-galactosaminyl]-L-seryl-[protein] + UDP + H(+). It catalyses the reaction L-threonyl-[protein] + UDP-N-acetyl-alpha-D-galactosamine = a 3-O-[N-acetyl-alpha-D-galactosaminyl]-L-threonyl-[protein] + UDP + H(+). It participates in protein modification; protein glycosylation. Functionally, catalyzes the initial reaction in O-linked oligosaccharide biosynthesis, the transfer of an N-acetyl-D-galactosamine residue to a serine or threonine residue on the protein receptor. Has a highest activity toward EA2 peptide substrate and a much lower activity with EPO-T, Muc2, Muc1a, Muc1b. This chain is Polypeptide N-acetylgalactosaminyltransferase 4 (Galnt4), found in Mus musculus (Mouse).